The following is a 1088-amino-acid chain: MGKYNLILSEYLSFVYNSQSAVQIPIYYSSNSELEKRCIDFHAKCVDNSKKGLSLSSLFEEYKDVIDNATLLSILSYSYDKYNAVERKLINYAKGKPLEADLTANELDYENNKITSELFKSAEEYTDSLMDPAILTSISSNLNAVMFWLERHSNDVGDANKVYRRRLDLFIIVASTINKYGVPRHNEKYRYEYEVMKDKPYYLVTWANSAIEMLMSVFSHEDYLIAKELIILSYSNRSTLAKLVSSPMSILVALIDINGTFITNEELELEFSDKYVKAIVPDQTFNELQEMIDNMKKAGLVDIPRMIQEWLVDCSLEKFTLMSKIYSWSFHVGFRKQKMIDAALDQLKTEYTEDVDNEMYNEYTMLIRDEIVKMLEVPVKHDDHLLRDSELAGLLSMSSASNGESRQLKFGRKTIFSTKKNMHVMDDIAHGRYTPGVIPPVNVDRPIPLGRRDVPGRRTRIIFILPYEYNSAQHAVVEKMLSYAKHTREYAEFYSQSNQLLSYGDVTRFLSSNSMVLYTDVSQWDSSQHNTQPFRKGIIMGLDMLANMTNDPKVVQTLNLYKQTQINLMDSYVQIPDGNVIKKIQYGAVASGEKQTKAANSIANLALIKTVLSRIANKYSFITKIIRVDGDDNYAVLQFNTDVTKQMVQEVSNDVRYIYSRMNAKVKALVSTVGIEIAKRYIAGGKIFFRAGINLLNNEKRGQSTQWDQAAILYSNYIVNKLRGFDTDREFILTKIIQMTSVAITGSLRLFPSERVLTTNSTFKVFDSEDFIIEYGTTDDEVYIQRAFMSLSSQKSGIADEIASSQTFKNYVSKLSDQLLVSKNAIVSKGIAVTEKAKLNSYAPVYLEKRRAQISALLTMLQKPVSFKSNKITINDILRDIKPFFVTTEAKLPIQYRKFMPTLPDNVQYVIQCIGSRTYQIEDSGSKSSISKLISKYSVYKPSIEELYKVISLREQEIQLYLVSLGVPPVDAGTYVGSRIYSQDKYKILESYVYNLLSINYGCYQLFDFNSPDLEKLIRIPFKGKIPAVTFILHLYAKLEIINYAIKNKSWISLFCNYPKSEMIKLWKKMWNITALRSPYTSANFFQD.

In terms of domain architecture, RdRp catalytic spans 501 to 687 (LSYGDVTRFL…AKRYIAGGKI (187 aa)).

Belongs to the reoviridae RNA-directed RNA polymerase family. In terms of assembly, interacts with VP3 (Potential). Interacts with VP2; this interaction activates VP1. Interacts with NSP5; this interaction is probably necessary for the formation of functional virus factories. Interacts with NSP2; this interaction is weak. Mg(2+) is required as a cofactor.

Its subcellular location is the virion. The enzyme catalyses RNA(n) + a ribonucleoside 5'-triphosphate = RNA(n+1) + diphosphate. RNA-directed RNA polymerase that is involved in both transcription and genome replication. Together with VP3 capping enzyme, forms an enzyme complex positioned near the channels situated at each of the five-fold vertices of the core. Following infection, the outermost layer of the virus is lost, leaving a double-layered particle (DLP) made up of the core and VP6 shell. VP1 then catalyzes the transcription of fully conservative plus-strand genomic RNAs that are extruded through the DLP's channels into the cytoplasm where they function as mRNAs for translation of viral proteins. One copy of each of the viral (+)RNAs is also recruited during core assembly, together with newly synthesized polymerase complexes and VP2. The polymerase of these novo-formed particles catalyzes the synthesis of complementary minus-strands leading to dsRNA formation. To do so, the polymerase specifically recognizes and binds 4 bases 5'-UGUG-3' in the conserved 3'-sequence of plus-strand RNA templates. VP2 presumably activates the autoinhibited VP1-RNA complex to coordinate packaging and genome replication. Once dsRNA synthesis is complete, the polymerase switches to the transcriptional mode, thus providing secondary transcription. The sequence is that of RNA-directed RNA polymerase from Sus scrofa (Pig).